A 533-amino-acid chain; its full sequence is Tryptophan N-monooxygenase CYP79A68 (533 aa).

The chain crosses the membrane as a helical span at residues 12-32 (VTPPISLSLAFIIFMFLVKFI). The N-linked (GlcNAc...) asparagine glycan is linked to N209. C471 contacts heme.

The protein belongs to the cytochrome P450 family. Heme is required as a cofactor. Confined to buds.

It localises to the membrane. The enzyme catalyses L-tryptophan + 2 reduced [NADPH--hemoprotein reductase] + 2 O2 = (E)-(indol-3-yl)acetaldehyde oxime + 2 oxidized [NADPH--hemoprotein reductase] + CO2 + 3 H2O + 2 H(+). Catalyzes with low efficiency E and Z isomers of indole-3-acetaldoxime from tryptophan (Trp). In Prunus mume (Japanese apricot), this protein is Tryptophan N-monooxygenase CYP79A68.